The chain runs to 546 residues: Acyl-CoA ligase oryP (546 aa).

Residues 166-174 (TSGTTGAPK), 300-305 (QFWLNL), and Arg403 contribute to the ATP site. CoA is bound by residues 412-414 (WDH) and 482-484 (LLR). Lys499 lines the ATP pocket.

It belongs to the ATP-dependent AMP-binding enzyme family.

It participates in secondary metabolite biosynthesis. In terms of biological role, acyl-CoA ligase; part of the gene cluster that mediates the biosynthesis of oryzines, natural products with an unusual maleidride backbone. The two subunits of the fungal fatty acid synthase oryfasA and oryfasB probably form octenoic acid. This fatty acid is most likely activated by the acyl-CoA ligase oryP to give octenyl-CoA before the citrate synthase-like protein oryE catalyzes condensation with oxaloacetate to form tricarboxylic acid. The next steps of the pathways are conjectural, but a favorite possible route has been proposed, beginning with decarboxylation and concomitant dehydration by the decarboxylase oryM, followed by tautomerization, which may lead to the production of a diene intermediate. Reduction of this diene intermediate could give the known metabolite piliformic acid. On the pathway to oryzine B and oryzine A, however, hydroxylation of the diene by the alpha-ketoglutarate-dependent dioxygenase oryG and lactonisation by the lactonohydrolases oryH or oryL could give oryzine B directly. Finally, enoyl reduction by the dehydrogenase oryD would then convert oryzine B into oryzine A. The chain is Acyl-CoA ligase oryP from Aspergillus oryzae (strain ATCC 42149 / RIB 40) (Yellow koji mold).